The following is a 209-amino-acid chain: Inner membrane protein YjdF (209 aa).

The Periplasmic segment spans residues 1–7; sequence MTRTLKP. The chain crosses the membrane as a helical span at residues 8–28; the sequence is LILNTSALTLTLILIYTGISA. The Cytoplasmic segment spans residues 29–31; that stretch reads HDK. The helical transmembrane segment at 32–52 threads the bilayer; sequence LTWLMEVTPVIIVVQLLLATA. Over 53–55 the chain is Periplasmic; it reads RRY. A helical membrane pass occupies residues 56-76; sequence PLTPLLYTLIFLHAIILMVGG. The Cytoplasmic portion of the chain corresponds to 77-131; that stretch reads QYTYAKVPVGFEVQEWLGLSRNPYDKLGHFFQGLVPALVAREILVRGMYVRGRKM. Residues 132–152 form a helical membrane-spanning segment; the sequence is VAFLVCCVALAISAMYELIEW. Residues 153-177 are Periplasmic-facing; it reads WAALAMGQGADDFLGTQGDQWDTQS. The chain crosses the membrane as a helical span at residues 178–198; the sequence is DMFCALLGALTTVIFLARFHC. Residues 199-209 lie on the Cytoplasmic side of the membrane; it reads RQLRRFGLITG.

The protein resides in the cell inner membrane. This chain is Inner membrane protein YjdF (yjdF), found in Escherichia coli (strain K12).